An 858-amino-acid polypeptide reads, in one-letter code: MAAAAEEGMSAAALVMSVPDSIGRSPESEGVGAGDEEKDAATKGTVAVGDSEEDGEDVFEVERILDMKCEGGKNLYKVRWKGYTSEDDTWEPEVHLEDCKEVLLEFRKKLAENKAKAVRKDIQRLSLNNDIFEADSDSDQQSDTKEDISPRKKKKKIKCKEETSPEDLRKKRTKMGKLKDKFKTELESTSEIIGFDVKTKKRIWEVKEELKDSKKPKKDEIKETKELKKANKRAEVRDLKIKIREDVKENRKTKKERYIESPLESESPNDSLILEDDSEDFISDNREENQNVRSVRDKTAQETVQEGIFEKHLDDLISIEEDAGTRVRRKKTKPRKFEEPKEIKKLESTNAFLERRAIPKKQRNQDKGISNLELNKLPSPVFAQTLKSSRLSGEEKSLKSPDLAEEEKEKKNEPKGKYQKRYDLDKEEKARKEPKVLKSFKEIRNAFDLFKKTTEEKNDVLENNSKREEISLDSKIMNDNKTKDKCSLKEKRNTRDETDTWAYIAAEGDQEVSDSVCQTDETSDGRQPVLSLGMDLQLEWMKLEDFQKHLDGEDEPFITTNRIPNNLLRDAVKNGDYIAVKVALNSNEEYNLDQEDSTGMTLVMLAAAGGQDDLLRLLITKGAKVNGRQKNGTTALIHAAEKNFLTTVAILLEAGAFVNVQQSNGETALMKACKRGNSDIVRLVIECGADCNILSKHQNSALYFAKQCNNVLVYELLKSHLETLSRVAEETIRDYFESRLALLEPVFPIACHRLCEGPDFSTDFNYMPPQNMPEGSGVLLFIFHANFLGKDVIARLCGPCSVQAVVLNDKFQLPVFLDSHFVYSFSPVAGPNKLFIRLTEAPFAKVKLLIGAYRVQLQ.

Positions 18 to 55 (VPDSIGRSPESEGVGAGDEEKDAATKGTVAVGDSEEDG) are disordered. Residues serine 51, serine 85, serine 136, and serine 138 each carry the phosphoserine modification. The 60-residue stretch at 59–118 (FEVERILDMKCEGGKNLYKVRWKGYTSEDDTWEPEVHLEDCKEVLLEFRKKLAENKAKAV) folds into the Chromo domain. The histone H3K9me3 binding stretch occupies residues 80–87 (WKGYTSED). The tract at residues 129–175 (NDIFEADSDSDQQSDTKEDISPRKKKKKIKCKEETSPEDLRKKRTKM) is disordered. Threonine 144 carries the post-translational modification Phosphothreonine. Serine 149 and serine 164 each carry phosphoserine; by CDK1. Positions 159 to 169 (CKEETSPEDLR) are enriched in basic and acidic residues. Serine 188 is modified (phosphoserine). Disordered stretches follow at residues 209-234 (ELKD…NKRA) and 250-300 (NRKT…DKTA). Phosphoserine is present on residues serine 267, serine 271, and serine 278. A compositionally biased stretch (acidic residues) spans 273 to 282 (ILEDDSEDFI). Positions 283–300 (SDNREENQNVRSVRDKTA) are enriched in basic and acidic residues. The residue at position 318 (serine 318) is a Phosphoserine. Residues 321-431 (EDAGTRVRRK…YDLDKEEKAR (111 aa)) form a disordered region. Residues 335–357 (RKFEEPKEIKKLESTNAFLERRA) show a composition bias toward basic and acidic residues. Phosphothreonine; by CDK1 is present on threonine 385. Phosphoserine occurs at positions 392 and 400. The segment covering 407-431 (EKEKKNEPKGKYQKRYDLDKEEKAR) has biased composition (basic and acidic residues). Residue threonine 453 is modified to Phosphothreonine. ANK repeat units lie at residues 598–627 (TGMT…KVNG), 631–660 (NGTT…FVNV), 664–693 (NGET…DCNI), and 697–726 (HQNS…TLSR).

As to quaternary structure, homodimer. Interacts (via chromo domain) with histone H3K9me3. Has the highest affinity for H3K9me3, and lesser affinity for H3K9me2 and H3K9me1. Component of the HUSH complex; at least composed of TASOR, PPHLN1 and MPHOSPH8. Interacts with DNMT3, EHMT1 and SETDB1. Interacts with MORC2; the interaction associateS MORC2 with the HUSH complex which recruits MORC2 to heterochromatic loci. Interacts with ZNF638; leading to recruitment of the HUSH complex to unintegrated retroviral DNA. Interacts with TASOR. Post-translationally, phosphorylated in M (mitotic) phase. Phosphorylation by CDK1 promotes dissociation from chromatin. As to expression, expressed in the spermatogonia, spermatocytes and granular cells within the cerebellum.

The protein resides in the nucleus. It is found in the chromosome. Functionally, heterochromatin component that specifically recognizes and binds methylated 'Lys-9' of histone H3 (H3K9me) and promotes recruitment of proteins that mediate epigenetic repression. Mediates recruitment of the HUSH complex to H3K9me3 sites: the HUSH complex is recruited to genomic loci rich in H3K9me3 and is required to maintain transcriptional silencing by promoting recruitment of SETDB1, a histone methyltransferase that mediates further deposition of H3K9me3, as well as MORC2. Binds H3K9me and promotes DNA methylation by recruiting DNMT3A to target CpG sites; these can be situated within the coding region of the gene. Mediates down-regulation of CDH1 expression. Also represses L1 retrotransposons in collaboration with MORC2 and, probably, SETDB1, the silencing is dependent of repressive epigenetic modifications, such as H3K9me3 mark. Silencing events often occur within introns of transcriptionally active genes, and lead to the down-regulation of host gene expression. The HUSH complex is also involved in the silencing of unintegrated retroviral DNA by being recruited by ZNF638: some part of the retroviral DNA formed immediately after infection remains unintegrated in the host genome and is transcriptionally repressed. The chain is M-phase phosphoprotein 8 from Mus musculus (Mouse).